A 622-amino-acid chain; its full sequence is Sodium-dependent serotonin transporter (622 aa).

The segment at 1–53 is disordered; it reads MDRSGSSDFAGAAATTGRSNPAPWSDDKESPNNEDDSNEDDGDHTTPAKVTDP. Residues 1 to 82 lie on the Cytoplasmic side of the membrane; it reads MDRSGSSDFA…TRETWGQKAE (82 aa). The segment covering 32–42 has biased composition (acidic residues); it reads NNEDDSNEDDG. The next 3 helical transmembrane spans lie at 83 to 103, 111 to 130, and 155 to 175; these read FLLA…FPYI, AFLV…LFYM, and GVGY…NTII. Gly89, Ala91, Val92, and Asn96 together coordinate Na(+). Residues 176-244 are Extracellular-facing; that stretch reads GWAVYYLFAS…NGLDFMGPVK (69 aa). A disulfide bridge connects residues Cys195 and Cys204. N-linked (GlcNAc...) asparagine glycosylation is present at Asn211. A run of 5 helical transmembrane segments spans residues 245-263, 272-289, 325-342, 354-375, and 408-427; these read PTLA…FSLW, VVWV…ILLV, IFFS…LSSY, LITS…FSVL, and MSGS…TLGL. Residues Ser328, Asn360, Leu425, Asp428, and Ser429 each coordinate Na(+). Helical transmembrane passes span 455–473, 489–509, 530–549, and 568–586; these read LFVL…PTMT, GLAI…FYGV, ICWT…FSIM, and VGWA…YIIY. Over 587-622 the chain is Cytoplasmic; that stretch reads KFFFASKGGCRQRLQESFQPEDNCGSVVPGQQGTSV.

Belongs to the sodium:neurotransmitter symporter (SNF) (TC 2.A.22) family. In terms of tissue distribution, expression is specific to cell bodies in the ventral ganglion of the embryonic and larval nervous system.

It localises to the cell membrane. Terminates the action of serotonin by its high affinity sodium-dependent reuptake into presynaptic terminals. The protein is Sodium-dependent serotonin transporter (SerT) of Drosophila melanogaster (Fruit fly).